Reading from the N-terminus, the 164-residue chain is 6,7-dimethyl-8-ribityllumazine synthase (164 aa).

5-amino-6-(D-ribitylamino)uracil-binding positions include F28, 62 to 64 (ALE), and 86 to 88 (AVI). (2S)-2-hydroxy-3-oxobutyl phosphate is bound at residue 91-92 (ET). The active-site Proton donor is the H94. 5-amino-6-(D-ribitylamino)uracil is bound at residue N119. R133 is a (2S)-2-hydroxy-3-oxobutyl phosphate binding site.

It belongs to the DMRL synthase family.

It catalyses the reaction (2S)-2-hydroxy-3-oxobutyl phosphate + 5-amino-6-(D-ribitylamino)uracil = 6,7-dimethyl-8-(1-D-ribityl)lumazine + phosphate + 2 H2O + H(+). Its pathway is cofactor biosynthesis; riboflavin biosynthesis; riboflavin from 2-hydroxy-3-oxobutyl phosphate and 5-amino-6-(D-ribitylamino)uracil: step 1/2. In terms of biological role, catalyzes the formation of 6,7-dimethyl-8-ribityllumazine by condensation of 5-amino-6-(D-ribitylamino)uracil with 3,4-dihydroxy-2-butanone 4-phosphate. This is the penultimate step in the biosynthesis of riboflavin. The polypeptide is 6,7-dimethyl-8-ribityllumazine synthase (Nitrosomonas europaea (strain ATCC 19718 / CIP 103999 / KCTC 2705 / NBRC 14298)).